Here is an 890-residue protein sequence, read N- to C-terminus: DNA mismatch repair protein MutS (890 aa).

634–641 (GPNMGGKS) is an ATP binding site.

This sequence belongs to the DNA mismatch repair MutS family.

This protein is involved in the repair of mismatches in DNA. It is possible that it carries out the mismatch recognition step. This protein has a weak ATPase activity. This is DNA mismatch repair protein MutS from Burkholderia pseudomallei (strain 1710b).